We begin with the raw amino-acid sequence, 348 residues long: Mediator of RNA polymerase II transcription subunit 18 (348 aa).

Residues 152–218 are compositionally biased toward basic and acidic residues; the sequence is MDVDLEHKDK…KNDEVKHSEV (67 aa). The tract at residues 152-227 is disordered; it reads MDVDLEHKDK…VNLEDGAETG (76 aa). Residues 167-223 are a coiled coil; that stretch reads DTKEKEEDKKEEDKKEEDKKEEDKKEEDKKEEDKKEEEKVEKKNDEVKHSEVNLEDG.

It belongs to the Mediator complex subunit 18 family. In terms of assembly, component of the Mediator complex.

It is found in the nucleus. Component of the Mediator complex, a coactivator involved in the regulated transcription of nearly all RNA polymerase II-dependent genes. Mediator functions as a bridge to convey information from gene-specific regulatory proteins to the basal RNA polymerase II transcription machinery. Mediator is recruited to promoters by direct interactions with regulatory proteins and serves as a scaffold for the assembly of a functional preinitiation complex with RNA polymerase II and the general transcription factors. The protein is Mediator of RNA polymerase II transcription subunit 18 (SRB5) of Scheffersomyces stipitis (strain ATCC 58785 / CBS 6054 / NBRC 10063 / NRRL Y-11545) (Yeast).